Reading from the N-terminus, the 587-residue chain is Deoxynucleoside triphosphate triphosphohydrolase sahd-1 (587 aa).

Positions 92–262 (RFVHSLGTFS…GHDVDKMDYL (171 aa)) constitute an HD domain. The Zn(2+) site is built by His95, His134, Asp135, and Asp257. Positions 554-587 (EKFLTPRKRSPQDSPDEVSSSCSTAKRRLEFGSS) are disordered. Thr558 carries the post-translational modification Phosphothreonine.

It belongs to the SAMHD1 family. Homodimer. Homotetramer; in dGTP-bound form. Requires Zn(2+) as cofactor.

Its subcellular location is the nucleus. The protein localises to the chromosome. The enzyme catalyses a 2'-deoxyribonucleoside 5'-triphosphate + H2O = a 2'-deoxyribonucleoside + triphosphate + H(+). With respect to regulation, allosterically activated and regulated by GTP or dGTP. Allosteric activation promotes the formation of highly active homotetramers. Phosphorylation impairs homotetramerization, thereby inhibiting dNTPase activity. Has deoxynucleoside triphosphate (dNTPase) activity. dNTPase activity acts as a regulator of DNA precursor pools by regulating dNTP pools. Phosphorylation acts as a switch to control dNTPase-dependent and -independent functions. In Caenorhabditis elegans, this protein is Deoxynucleoside triphosphate triphosphohydrolase sahd-1.